The sequence spans 314 residues: L-lactate dehydrogenase 2 (314 aa).

NAD(+) contacts are provided by residues Val-16, Asp-37, Lys-42, Tyr-68, and 82 to 83 (GL). Residues Gln-85, Arg-91, and 123-126 (NPVD) contribute to the substrate site. Residues 121–123 (ATN) and Ser-146 contribute to the NAD(+) site. Residue 151 to 154 (DSAR) coordinates substrate. 2 residues coordinate beta-D-fructose 1,6-bisphosphate: Arg-156 and His-171. His-178 serves as the catalytic Proton acceptor. Residue Tyr-223 is modified to Phosphotyrosine. Thr-232 lines the substrate pocket.

Belongs to the LDH/MDH superfamily. LDH family. As to quaternary structure, homotetramer.

The protein localises to the cytoplasm. It catalyses the reaction (S)-lactate + NAD(+) = pyruvate + NADH + H(+). It participates in fermentation; pyruvate fermentation to lactate; (S)-lactate from pyruvate: step 1/1. Allosterically activated by fructose 1,6-bisphosphate (FBP). Functionally, catalyzes the conversion of lactate to pyruvate. In Bacillus cereus (strain ATCC 14579 / DSM 31 / CCUG 7414 / JCM 2152 / NBRC 15305 / NCIMB 9373 / NCTC 2599 / NRRL B-3711), this protein is L-lactate dehydrogenase 2.